A 106-amino-acid polypeptide reads, in one-letter code: Large ribosomal subunit protein uL24 (106 aa).

Belongs to the universal ribosomal protein uL24 family. In terms of assembly, part of the 50S ribosomal subunit.

Its function is as follows. One of two assembly initiator proteins, it binds directly to the 5'-end of the 23S rRNA, where it nucleates assembly of the 50S subunit. Functionally, one of the proteins that surrounds the polypeptide exit tunnel on the outside of the subunit. The protein is Large ribosomal subunit protein uL24 of Bordetella bronchiseptica (strain ATCC BAA-588 / NCTC 13252 / RB50) (Alcaligenes bronchisepticus).